A 337-amino-acid polypeptide reads, in one-letter code: Protein BIG GRAIN 1-like (337 aa).

Disordered stretches follow at residues methionine 1 to serine 32, serine 120 to serine 163, and lysine 179 to serine 235. A compositionally biased stretch (basic and acidic residues) spans histidine 137–alanine 146. Low complexity-rich tracts occupy residues proline 150 to serine 163 and proline 195 to alanine 209.

It belongs to the BIG GRAIN 1 (BG1) plant protein family.

The protein localises to the cell membrane. Functionally, involved in auxin transport. Regulator of the auxin signaling pathway. The polypeptide is Protein BIG GRAIN 1-like (Oryza sativa subsp. japonica (Rice)).